Reading from the N-terminus, the 204-residue chain is Probable nicotinate-nucleotide adenylyltransferase (204 aa).

This sequence belongs to the NadD family.

The enzyme catalyses nicotinate beta-D-ribonucleotide + ATP + H(+) = deamido-NAD(+) + diphosphate. Its pathway is cofactor biosynthesis; NAD(+) biosynthesis; deamido-NAD(+) from nicotinate D-ribonucleotide: step 1/1. Its function is as follows. Catalyzes the reversible adenylation of nicotinate mononucleotide (NaMN) to nicotinic acid adenine dinucleotide (NaAD). In Dehalococcoides mccartyi (strain ATCC BAA-2100 / JCM 16839 / KCTC 5957 / BAV1), this protein is Probable nicotinate-nucleotide adenylyltransferase.